A 138-amino-acid polypeptide reads, in one-letter code: MTVKALTQISSAGRNGVGAFVLQCKKLDIHYSDWAGSSRGMNGFIKSLLPKFAAANPQIEFVVSPRPAKHPILMGHYINGRTKAICVRNMEPLEILKKAELLRDASGEKPQKFKKPVTSTNPSVRGVWSPYHGQGMAV.

Belongs to the mitochondrion-specific ribosomal protein mL43 family. Component of the mitochondrial large ribosomal subunit (mt-LSU). Mature N.crassa 74S mitochondrial ribosomes consist of a small (37S) and a large (54S) subunit. The 37S small subunit contains a 16S ribosomal RNA (16S mt-rRNA) and 32 different proteins. The 54S large subunit contains a 23S rRNA (23S mt-rRNA) and 42 different proteins.

It is found in the mitochondrion. Component of the mitochondrial ribosome (mitoribosome), a dedicated translation machinery responsible for the synthesis of mitochondrial genome-encoded proteins, including at least some of the essential transmembrane subunits of the mitochondrial respiratory chain. The mitoribosomes are attached to the mitochondrial inner membrane and translation products are cotranslationally integrated into the membrane. This is Large ribosomal subunit protein mL43 (mrpl51) from Neurospora crassa (strain ATCC 24698 / 74-OR23-1A / CBS 708.71 / DSM 1257 / FGSC 987).